Consider the following 361-residue polypeptide: Arginine N(omega)-methyltransferase (361 aa).

Residues 1–17 (MRHVQEARAVPAEHEAR) are compositionally biased toward basic and acidic residues. Positions 1 to 24 (MRHVQEARAVPAEHEARPAPVTMP) are disordered. An SAM-dependent MTase PRMT-type domain is found at 65–361 (DADAFAQIAR…WSDFTLRVSI (297 aa)).

This sequence belongs to the class I-like SAM-binding methyltransferase superfamily. Protein arginine N-methyltransferase family.

The enzyme catalyses L-arginine + S-adenosyl-L-methionine = N(omega)-methyl-L-arginine + S-adenosyl-L-homocysteine + H(+). It participates in antibiotic biosynthesis. Functionally, involved in the biosynthesis of the glucosamine-nitrosourea antibiotic streptozotocin (SZN). Catalyzes the conversion of L-arginine to N(omega)-methyl-L-arginine (L-NMA), using S-adenosyl-L-methionine (SAM) as a methyl donor. The chain is Arginine N(omega)-methyltransferase from Streptomyces achromogenes subsp. streptozoticus.